A 101-amino-acid chain; its full sequence is NAD(P)H-quinone oxidoreductase subunit 4L, chloroplastic (101 aa).

A run of 3 helical transmembrane segments spans residues Met2–Ile22, Met32–Phe52, and Ile61–Val81.

This sequence belongs to the complex I subunit 4L family. NDH is composed of at least 16 different subunits, 5 of which are encoded in the nucleus.

The protein resides in the plastid. The protein localises to the chloroplast thylakoid membrane. The enzyme catalyses a plastoquinone + NADH + (n+1) H(+)(in) = a plastoquinol + NAD(+) + n H(+)(out). It catalyses the reaction a plastoquinone + NADPH + (n+1) H(+)(in) = a plastoquinol + NADP(+) + n H(+)(out). In terms of biological role, NDH shuttles electrons from NAD(P)H:plastoquinone, via FMN and iron-sulfur (Fe-S) centers, to quinones in the photosynthetic chain and possibly in a chloroplast respiratory chain. The immediate electron acceptor for the enzyme in this species is believed to be plastoquinone. Couples the redox reaction to proton translocation, and thus conserves the redox energy in a proton gradient. The sequence is that of NAD(P)H-quinone oxidoreductase subunit 4L, chloroplastic from Piper cenocladum (Ant piper).